We begin with the raw amino-acid sequence, 361 residues long: MKFGWIKTTGTDSEERMESVKDALESSIPGLMVEKEEISSVRELGNIKIVSDSLDADVVLINKGEDLEILKSAKLSGKETAVYVEINTKDDEVYATEVSKLDFVDYVVLEGSDWTIIPLENIIADLFGEEIKIVSVVTNVKDAEAAYEILEKGVDGVVLIPEDINEVKDFSKLIERMNSESLKLDYATVTKIEPVGSGDRVCIDTCSMMEMGEGMLIGSYSRGMFLVHSETVENPYVATRPFRVNAGPVHAYILCPENKTKYLSDLKAGDKVLVVNKNGETRESIIGRVKIEKRPLFLVEAEYNGENLRTILQNAETIRLVGEDGKPVSVVDLKVGTKVLIKPDENARHFGMAIKETIVEK.

This sequence belongs to the archaeal-type DHQ synthase family.

The catalysed reaction is 2-amino-2,3,7-trideoxy-D-lyxo-hept-6-ulosonate + NAD(+) + H2O = 3-dehydroquinate + NH4(+) + NADH + H(+). Catalyzes the oxidative deamination and cyclization of 2-amino-3,7-dideoxy-D-threo-hept-6-ulosonic acid (ADH) to yield 3-dehydroquinate (DHQ), which is fed into the canonical shikimic pathway of aromatic amino acid biosynthesis. In Methanococcus maripaludis (strain C5 / ATCC BAA-1333), this protein is 3-dehydroquinate synthase.